The following is a 297-amino-acid chain: MGTTLDIKIKRANKVYHAGEMLSGVVVISSKDSVQHQGVSLTMEGTVNLQLSAKSVGVFEAFYNSVKPIQIINSTIDVLKPGKIPSGKTEVPFEFPLLVKGSKVLYETYHGVFVNIQYTLRCDMRRSLLAKDLTKTCEFIVHSAPQKGKLTPSPVDFTITPETLQNVKERASLPKFFIRGHLNSTNCAITQPLTGELVVEHSDAAIRSIELQLVRVETCGCAEGYARDATEIQNIQIADGDICRNLSVPLYMVFPRLFTCPTLETTNFKVEFEVNVVVLLHADHLITENFPLKLCRT.

The protein belongs to the VPS26 family. As to quaternary structure, component of the commander complex that is essential for endosomal recycling of transmembrane cargos; the commander complex is composed of the CCC subcomplex and the retriever subcomplex. Component of the heterotrimeric retriever complex consisting of VPS26C, VPS29 and VPS35L; within the complex interacts with VPS35L. Interacts with SNX17 (via C-terminus); the interaction is direct and associates SNX17 with the retriever complex. Interacts with SNX31; the interaction is direct.

The protein resides in the endosome. In terms of biological role, component of the commander complex that is essential for endosomal recycling of transmembrane cargos; the commander complex is composed of the CCC subcomplex and the retriever subcomplex. Component of the retriever complex, which is a heterotrimeric complex related to retromer cargo-selective complex (CSC) and essential for retromer-independent retrieval and recycling of numerous cargos such as integrin alpha-5/beta-1 (ITGA5:ITGB1). The recruitment of the retriever complex to the endosomal membrane involves CCC and WASH complexes. In the endosomes, drives the retriever and recycling of NxxY-motif-containing cargo proteins by coupling to SNX17, a cargo essential for the homeostatic maintenance of numerous cell surface proteins associated with processes that include cell migration, cell adhesion, nutrient supply and cell signaling. The chain is Vacuolar protein sorting-associated protein 26C from Mus musculus (Mouse).